The primary structure comprises 43 residues: Protein PsbN (43 aa).

Residues 5 to 27 (TLIAISISGLLVSFTGYALYTAF) form a helical membrane-spanning segment.

The protein belongs to the PsbN family.

It is found in the plastid. The protein resides in the chloroplast thylakoid membrane. Functionally, may play a role in photosystem I and II biogenesis. This chain is Protein PsbN, found in Phaseolus vulgaris (Kidney bean).